We begin with the raw amino-acid sequence, 105 residues long: Keratin-associated protein 17-1 (105 aa).

Interacts with hair keratins.

In terms of biological role, in the hair cortex, hair keratin intermediate filaments are embedded in an interfilamentous matrix, consisting of hair keratin-associated proteins (KRTAP), which are essential for the formation of a rigid and resistant hair shaft through their extensive disulfide bond cross-linking with abundant cysteine residues of hair keratins. The matrix proteins include the high-sulfur and high-glycine-tyrosine keratins. The protein is Keratin-associated protein 17-1 (KRTAP17-1) of Homo sapiens (Human).